We begin with the raw amino-acid sequence, 330 residues long: Stimulated by retinoic acid gene 8 protein homolog (330 aa).

The Nuclear localization signal (NLS) signature appears at R50–R55. Residues Q88–A112 adopt a coiled-coil conformation.

As to quaternary structure, interacts with XPO1. Interacts with MEIOSIN. Post-translationally, phosphorylated. As to expression, expressed specifically in testis and fetal ovaries.

It is found in the cytoplasm. The protein resides in the nucleus. Its function is as follows. Meiosis-inducer required for the transition into meiosis for both female and male germ cells. In female germ cells, acts downstream of ZGLP1 as a key effector of the meiotic program: required for premeiotic DNA replication and subsequent events in meiotic prophase. During spermatogenesis, next to its role in meiotic initiation, promotes (but is not required for) spermatogonial differentiation. In complex with MEIOSIN, directly activates the transcription of a subset of critical meiotic genes playing a central role in cell-cycle switching from mitosis to meiosis. In Homo sapiens (Human), this protein is Stimulated by retinoic acid gene 8 protein homolog.